Reading from the N-terminus, the 483-residue chain is GDP-fucose protein O-fucosyltransferase 4 (483 aa).

Met-1 is a topological domain (cytoplasmic). A helical; Signal-anchor for type II membrane protein transmembrane segment spans residues 2–21 (ALCLWLFLVLPICCWCQGAV). At 22–483 (DLGDSGVFQP…RARGLSNDSR (462 aa)) the chain is on the lumenal side. 2 N-linked (GlcNAc...) asparagine glycosylation sites follow: Asn-151 and Asn-303. Cysteines 374 and 377 form a disulfide. The tract at residues 387–425 (RKAHRKNPKQNQPPQPKMANSSHMGCPLPSPGYGPVENV) is disordered. N-linked (GlcNAc...) asparagine glycosylation is found at Asn-406, Asn-428, Asn-456, and Asn-480.

The protein belongs to the glycosyltransferase 10 family.

It localises to the endoplasmic reticulum membrane. The catalysed reaction is L-threonyl-[protein] + GDP-beta-L-fucose = 3-O-(alpha-L-fucosyl)-L-threonyl-[protein] + GDP + H(+). It catalyses the reaction L-seryl-[protein] + GDP-beta-L-fucose = 3-O-(alpha-L-fucosyl)-L-seryl-[protein] + GDP + H(+). It participates in protein modification; protein glycosylation. In terms of biological role, protein O-fucosyltransferase that specifically catalyzes O-fucosylation of serine or threonine residues in EMI domains of target proteins. Attaches fucose through an O-glycosidic linkage. O-fucosylation of EMI domain-containing proteins may be required for facilitating protein folding and secretion. The chain is GDP-fucose protein O-fucosyltransferase 4 (fut11) from Danio rerio (Zebrafish).